A 384-amino-acid polypeptide reads, in one-letter code: Chaperone protein DnaJ (384 aa).

One can recognise a J domain in the interval 5–70 (DYYEILGVTR…QKKRIYDTYG (66 aa)). Residues 134-212 (GTEKEIRLQT…CNGQGRTRQS (79 aa)) form a CR-type zinc finger. Residues C147, C150, C164, C167, C186, C189, C200, and C203 each coordinate Zn(2+). CXXCXGXG motif repeat units follow at residues 147–154 (CEECNGSG), 164–171 (CPVCQGSG), 186–193 (CTRCQGMG), and 200–207 (CKTCNGQG). Residues 352–384 (KEKSGEKVRKWPWSKRKDREKKSMAESTREART) form a disordered region.

The protein belongs to the DnaJ family. As to quaternary structure, homodimer. Zn(2+) serves as cofactor.

It localises to the cytoplasm. Its function is as follows. Participates actively in the response to hyperosmotic and heat shock by preventing the aggregation of stress-denatured proteins and by disaggregating proteins, also in an autonomous, DnaK-independent fashion. Unfolded proteins bind initially to DnaJ; upon interaction with the DnaJ-bound protein, DnaK hydrolyzes its bound ATP, resulting in the formation of a stable complex. GrpE releases ADP from DnaK; ATP binding to DnaK triggers the release of the substrate protein, thus completing the reaction cycle. Several rounds of ATP-dependent interactions between DnaJ, DnaK and GrpE are required for fully efficient folding. Also involved, together with DnaK and GrpE, in the DNA replication of plasmids through activation of initiation proteins. In Syntrophobacter fumaroxidans (strain DSM 10017 / MPOB), this protein is Chaperone protein DnaJ.